A 366-amino-acid chain; its full sequence is Histidinol-phosphate aminotransferase 2 (366 aa).

Residues 1 to 11 are compositionally biased toward polar residues; the sequence is MQVKDQLSSLQ. Positions 1–21 are disordered; it reads MQVKDQLSSLQPYKPGKSPEQ. Residue Lys222 is modified to N6-(pyridoxal phosphate)lysine.

It belongs to the class-II pyridoxal-phosphate-dependent aminotransferase family. Histidinol-phosphate aminotransferase subfamily. In terms of assembly, homodimer. It depends on pyridoxal 5'-phosphate as a cofactor.

It carries out the reaction L-histidinol phosphate + 2-oxoglutarate = 3-(imidazol-4-yl)-2-oxopropyl phosphate + L-glutamate. Its pathway is amino-acid biosynthesis; L-histidine biosynthesis; L-histidine from 5-phospho-alpha-D-ribose 1-diphosphate: step 7/9. The chain is Histidinol-phosphate aminotransferase 2 (hisC2) from Bacillus cereus (strain ATCC 14579 / DSM 31 / CCUG 7414 / JCM 2152 / NBRC 15305 / NCIMB 9373 / NCTC 2599 / NRRL B-3711).